Consider the following 541-residue polypeptide: MVSPGPVFGIVLLIIARVSRSAGIGFRFASYIDNYMVLQKEPSGAVIWGFGTPGATVTVTLCQGQETIMKKVTSVKEPSNTWMVVLDPMKPGGPFEVMAQQTLGTMNFTLRVHDVLFGDVWLCSGQSNMQMTVSQIFNASKELSDTAAYQSVRIFSVSLIQSEEELDDLTEVDLSWSKPTAGNLGHGNFTYMSAVCWLFGRYLYDTLQYPIGLVSSSWGGTYIEVWSSRRTLKACGVPNTRDERVGQPEIKPMRNECNSEESSCPFRVVPSVRVTGPTRHSVLWNAMIHPLQNMTLKGVVWYQGESNADYNRDLYTCMFPELIEDWRQTFHYGSQGQTDRFFPFGFVQLSSYMLKNSSDYGFPEIRWHQTADFGHVPNPKMPNTFMAVAIDLCDRDSPFGSIHPRDKQTVAYRLHLGARAVAYGEKNLTFQGPLPKKIELLASNGLLNLTYDQEIQVQMQDNKTFEISCCSDRHCKWLPAPVNTFSTQTLILDLNACLGTVVAVRYAWTTWPCEYKQCAVYHTSSMLPAPPFIAQISHRGI.

The first 23 residues, 1–23, serve as a signal peptide directing secretion; that stretch reads MVSPGPVFGIVLLIIARVSRSAG. 8 N-linked (GlcNAc...) asparagine glycosylation sites follow: Asn107, Asn138, Asn188, Asn293, Asn356, Asn427, Asn448, and Asn462.

Disulfide-linked heterodimer of a small subunit and a large subunit. The two subunits are derived from a single precursor by proteolytic cleavage. Post-translationally, the lysosomal isoform is glycosylated. In terms of tissue distribution, highly expressed in liver, testis, and kidney, whereas skeletal muscle, adipose tissue, and heart have lower levels. Highest expression in brain and ovary and lower levels in liver and thymus.

It is found in the lysosome. Its subcellular location is the cytoplasm. It carries out the reaction N-acetyl-9-O-acetylneuraminate + H2O = N-acetylneuraminate + acetate + H(+). It catalyses the reaction an Ac-O-9-sialoglycoconjugate + H2O = a sialoglycoconjugate + acetate + H(+). Inhibited by diisopropyl fluorophosphate and diethyl-P-nitrophenyl phosphate. Functionally, catalyzes the removal of O-acetyl ester groups from position 9 of the free diacetylated sialate N-acetyl-9-O-acetylneuraminate (Neu5,9Ac2) in the cytosol and of the diacetylated sialate residues of sialylglycoconjugates in the lysosomes. Together with the sialate-O-acetyltransferase they regulate the balance of acetylated sialoglycoconjugates, key players in various processes such as cell-cell interactions, host-pathogen recognition, and tumor antigenicity. The chain is Sialate O-acetylesterase (Siae) from Mus musculus (Mouse).